Consider the following 280-residue polypeptide: uncharacterized protein (280 aa).

One can recognise a KilA-N domain in the interval 26-127; that stretch reads YFMSMKLLDV…TRVSILMRYY (102 aa).

This is an uncharacterized protein from Vertebrata (FPV).